We begin with the raw amino-acid sequence, 438 residues long: Anthranilate synthase component 1 (438 aa).

L-tryptophan-binding positions include Ser45 and Pro220 to Leu222. Gly255–Thr256 serves as a coordination point for chorismate. Position 282 (Glu282) interacts with Mg(2+). Chorismate-binding positions include Tyr370, Arg389, Gly405 to Gly407, and Gly407. Glu420 serves as a coordination point for Mg(2+).

This sequence belongs to the anthranilate synthase component I family. As to quaternary structure, heterotetramer consisting of two non-identical subunits: a beta subunit (TrpG) and a large alpha subunit (TrpE). Mg(2+) is required as a cofactor.

The enzyme catalyses chorismate + L-glutamine = anthranilate + pyruvate + L-glutamate + H(+). The protein operates within amino-acid biosynthesis; L-tryptophan biosynthesis; L-tryptophan from chorismate: step 1/5. With respect to regulation, feedback inhibited by tryptophan. In terms of biological role, part of a heterotetrameric complex that catalyzes the two-step biosynthesis of anthranilate, an intermediate in the biosynthesis of L-tryptophan. In the first step, the glutamine-binding beta subunit (TrpG) of anthranilate synthase (AS) provides the glutamine amidotransferase activity which generates ammonia as a substrate that, along with chorismate, is used in the second step, catalyzed by the large alpha subunit of AS (TrpE) to produce anthranilate. In the absence of TrpG, TrpE can synthesize anthranilate directly from chorismate and high concentrations of ammonia. This Aeropyrum pernix (strain ATCC 700893 / DSM 11879 / JCM 9820 / NBRC 100138 / K1) protein is Anthranilate synthase component 1 (trpE).